The chain runs to 167 residues: UPF0114 protein Tola_1474 (167 aa).

4 consecutive transmembrane segments (helical) span residues 15-35 (IMAP…IKFF), 53-73 (LILI…IVMV), 109-129 (VAAS…MNTE), and 136-156 (IKWY…MGYL).

This sequence belongs to the UPF0114 family.

The protein resides in the cell membrane. The polypeptide is UPF0114 protein Tola_1474 (Tolumonas auensis (strain DSM 9187 / NBRC 110442 / TA 4)).